The chain runs to 306 residues: Reticulocalbin-2 (306 aa).

The first 22 residues, 1–22 (MESPTLLGLLLLLLGGPGTSLG), serve as a signal peptide directing secretion. 6 consecutive EF-hand domains span residues 50–85 (EQQK…SFKS), 86–121 (YIIE…RVID), 144–173 (KKRF…EEAD), 175–210 (MKEF…DPAA), 226–251 (NDYD…NNEG), and 252–287 (LAQE…FLNS). Ca(2+) contacts are provided by D99, D101, D103, R105, and E110. Ca(2+) is bound by residues D188, D190, D192, E199, D229, D231, D233, K235, E240, D265, D267, D269, R271, and E276.

It belongs to the CREC family. In terms of assembly, may bind phospholipase A2, since the rat reticulocalbin-2 has been isolated on the phospholipase complex taipoxin columns. Expressed by the venom gland.

It is found in the secreted. In Crotalus adamanteus (Eastern diamondback rattlesnake), this protein is Reticulocalbin-2.